Reading from the N-terminus, the 298-residue chain is Small ribosomal subunit protein uS2 (298 aa).

Positions alanine 240 to tryptophan 298 are disordered. Low complexity predominate over residues alanine 248–alanine 271. The segment covering alanine 289–tryptophan 298 has biased composition (polar residues).

The protein belongs to the universal ribosomal protein uS2 family. Component of the small ribosomal subunit. Mature ribosomes consist of a small (40S) and a large (60S) subunit. The 40S subunit contains about 33 different proteins and 1 molecule of RNA (18S). The 60S subunit contains about 49 different proteins and 3 molecules of RNA (25S, 5.8S and 5S). Interacts with rps21.

It is found in the cytoplasm. Functionally, required for the assembly and/or stability of the 40S ribosomal subunit. Required for the processing of the 20S rRNA-precursor to mature 18S rRNA in a late step of the maturation of 40S ribosomal subunits. This is Small ribosomal subunit protein uS2 (rps0) from Aspergillus clavatus (strain ATCC 1007 / CBS 513.65 / DSM 816 / NCTC 3887 / NRRL 1 / QM 1276 / 107).